Here is a 370-residue protein sequence, read N- to C-terminus: MGDRRFIDFQFQDSNSSLRPRLGNATANNTCIVDDSFKYNLNGAVYSVVFILGLITNSVSLFVFCFRMKMRSETAIFITNLAVSDLLFVCTLPFKIFYNFNRHWPFGDTLCKISGTAFLTNIYGSMLFLTCISVDRFLAIVYPFRSRTIRTRRNSAIVCAGVWILVLSGGISASLFSTTNVNNATTTCFEGFSKRVWKTYLSKITIFIEVVGFIIPLILNVSCSSVVLRTLRKPATLSQIGTNKKKVLKMITVHMAVFVVCFVPYNSVLFLYALVRSQAITNCFLERFAKIMYPITLCLATLNCCFDPFIYYFTLESFQKSFYINAHIRMESLFKTETPLTTKPSLPAIQEEVSDQTTNNGGELMLESTF.

Over 1 to 43 (MGDRRFIDFQFQDSNSSLRPRLGNATANNTCIVDDSFKYNLNG) the chain is Extracellular. 3 N-linked (GlcNAc...) asparagine glycosylation sites follow: Asn15, Asn24, and Asn28. A helical membrane pass occupies residues 44–64 (AVYSVVFILGLITNSVSLFVF). At 65 to 73 (CFRMKMRSE) the chain is on the cytoplasmic side. Residues 74-94 (TAIFITNLAVSDLLFVCTLPF) form a helical membrane-spanning segment. The Extracellular segment spans residues 95–112 (KIFYNFNRHWPFGDTLCK). Cysteines 111 and 188 form a disulfide. Residues 113 to 133 (ISGTAFLTNIYGSMLFLTCIS) form a helical membrane-spanning segment. At 134–155 (VDRFLAIVYPFRSRTIRTRRNS) the chain is on the cytoplasmic side. The helical transmembrane segment at 156-176 (AIVCAGVWILVLSGGISASLF) threads the bilayer. At 177–203 (STTNVNNATTTCFEGFSKRVWKTYLSK) the chain is on the extracellular side. N-linked (GlcNAc...) asparagine glycosylation occurs at Asn183. The helical transmembrane segment at 204–224 (ITIFIEVVGFIIPLILNVSCS) threads the bilayer. The Cytoplasmic portion of the chain corresponds to 225-254 (SVVLRTLRKPATLSQIGTNKKKVLKMITVH). The helical transmembrane segment at 255–275 (MAVFVVCFVPYNSVLFLYALV) threads the bilayer. The Extracellular segment spans residues 276-294 (RSQAITNCFLERFAKIMYP). The chain crosses the membrane as a helical span at residues 295-315 (ITLCLATLNCCFDPFIYYFTL). Residues 316-370 (ESFQKSFYINAHIRMESLFKTETPLTTKPSLPAIQEEVSDQTTNNGGELMLESTF) are Cytoplasmic-facing.

It belongs to the G-protein coupled receptor 1 family. High expression in ovary. Not detected in the brain regions thalamus, putamen, caudate, frontal cortex, pons, hypothalamus and hippocampus.

The protein resides in the cell membrane. In terms of biological role, receptor for lysophosphatidic acid (LPA), a mediator of diverse cellular activities. Transduces a signal by increasing the intracellular calcium ions and by stimulating adenylyl cyclase activity. The rank order of potency for agonists of this receptor is 1-oleoyl- &gt; 1-stearoyl- &gt; 1-palmitoyl- &gt; 1-myristoyl- &gt; 1-alkyl- &gt; 1-alkenyl-LPA. This is Lysophosphatidic acid receptor 4 (LPAR4) from Homo sapiens (Human).